A 538-amino-acid polypeptide reads, in one-letter code: Phosphoenolpyruvate carboxykinase (ATP) (538 aa).

Substrate-binding residues include arginine 64, tyrosine 205, and lysine 211. Residues lysine 211, histidine 230, and glycine 246–threonine 254 each bind ATP. 2 residues coordinate Mn(2+): lysine 211 and histidine 230. Aspartate 267 lines the Mn(2+) pocket. Residues glutamate 295, arginine 331, arginine 447–isoleucine 448, and threonine 453 contribute to the ATP site. Arginine 331 contributes to the substrate binding site.

Belongs to the phosphoenolpyruvate carboxykinase (ATP) family. As to quaternary structure, monomer. The cofactor is Mn(2+).

It is found in the cytoplasm. The enzyme catalyses oxaloacetate + ATP = phosphoenolpyruvate + ADP + CO2. It functions in the pathway carbohydrate biosynthesis; gluconeogenesis. Involved in the gluconeogenesis. Catalyzes the conversion of oxaloacetate (OAA) to phosphoenolpyruvate (PEP) through direct phosphoryl transfer between the nucleoside triphosphate and OAA. This is Phosphoenolpyruvate carboxykinase (ATP) from Haemophilus influenzae (strain 86-028NP).